Consider the following 38-residue polypeptide: Large ribosomal subunit protein bL36 (38 aa).

This sequence belongs to the bacterial ribosomal protein bL36 family.

This is Large ribosomal subunit protein bL36 from Paraburkholderia phymatum (strain DSM 17167 / CIP 108236 / LMG 21445 / STM815) (Burkholderia phymatum).